The sequence spans 374 residues: MKKKVIVGLSGGVDSSVAAYLLIQQGYEVEGLFMRNWDSSANNDILGNQEIDNDVCPQEQDYLDALEVANKLGIKLHRIDFVQEYWEYVFEYFIKEYKKGRTPNPDILCNKYIKFDKFLNHAINELKADYIAMGHYAGVRFNEKTKQYEMIRAVDTNKDQTYFLCQLTQNQLSKTLFPLQSLEKPEIRKIAAEQGLITADKKDSTGICFIGEREFTKFLQNYISNQPGDIVDIKTNEVLGKHIGAMYYTIGQRKGLNLGGMKEPYYVAAKDIDKKIIYVCPASDESYLLSNNAIVTEINWSLDLKQYIDNVEEFECTAKFRYRQPDVKVRLNKIKDNEYKVSYDAIVKAVTPGQEAVFYLNDICLGGGIIDIVE.

ATP contacts are provided by residues 8–15 (GLSGGVDS) and M34. Positions 104-106 (NPD) are interaction with target base in tRNA. The active-site Nucleophile is the C109. C109 and C208 are disulfide-bonded. Residue G134 participates in ATP binding. Positions 158–160 (KDQ) are interaction with tRNA. C208 acts as the Cysteine persulfide intermediate in catalysis. Residues 321–322 (RY) form an interaction with tRNA region.

The protein belongs to the MnmA/TRMU family.

The protein localises to the cytoplasm. The catalysed reaction is S-sulfanyl-L-cysteinyl-[protein] + uridine(34) in tRNA + AH2 + ATP = 2-thiouridine(34) in tRNA + L-cysteinyl-[protein] + A + AMP + diphosphate + H(+). Catalyzes the 2-thiolation of uridine at the wobble position (U34) of tRNA, leading to the formation of s(2)U34. This is tRNA-specific 2-thiouridylase MnmA from Mesoplasma florum (strain ATCC 33453 / NBRC 100688 / NCTC 11704 / L1) (Acholeplasma florum).